Consider the following 122-residue polypeptide: Basic phospholipase A2 CbII (122 aa).

Intrachain disulfides connect Cys26–Cys115, Cys28–Cys44, Cys43–Cys95, Cys49–Cys122, Cys50–Cys88, Cys57–Cys81, and Cys75–Cys86. Ca(2+) contacts are provided by Tyr27, Gly29, and Gly31. The active site involves His47. Position 48 (Asp48) interacts with Ca(2+). Residue Asp89 is part of the active site.

It belongs to the phospholipase A2 family. Group I subfamily. D49 sub-subfamily. Heterodimer of an acidic subunit (CbIalpha or CbIbeta) and a basic subunit (CbII). The acidic subunit is non-toxic, and increases the toxicity of the basic subunit. The cofactor is Ca(2+). As to expression, expressed by the venom gland.

The protein localises to the secreted. It carries out the reaction a 1,2-diacyl-sn-glycero-3-phosphocholine + H2O = a 1-acyl-sn-glycero-3-phosphocholine + a fatty acid + H(+). Its function is as follows. Heterodimer: presynaptic neurotoxin. Functionally, monomer: Snake venom phospholipase A2 (PLA2) that exhibits strong anticoagulant effects by binding to factor Xa (F10) and inhibiting the prothrombinase activity (IC(50) is 20 nM). PLA2 catalyzes the calcium-dependent hydrolysis of the 2-acyl groups in 3-sn-phosphoglycerides. This Pseudocerastes fieldi (Field's horned viper) protein is Basic phospholipase A2 CbII.